The sequence spans 271 residues: 4-diphosphocytidyl-2-C-methyl-D-erythritol kinase (271 aa).

K17 is an active-site residue. 97–107 (PVGSGLGGGSS) provides a ligand contact to ATP. D137 is a catalytic residue.

Belongs to the GHMP kinase family. IspE subfamily.

It catalyses the reaction 4-CDP-2-C-methyl-D-erythritol + ATP = 4-CDP-2-C-methyl-D-erythritol 2-phosphate + ADP + H(+). It functions in the pathway isoprenoid biosynthesis; isopentenyl diphosphate biosynthesis via DXP pathway; isopentenyl diphosphate from 1-deoxy-D-xylulose 5-phosphate: step 3/6. In terms of biological role, catalyzes the phosphorylation of the position 2 hydroxy group of 4-diphosphocytidyl-2C-methyl-D-erythritol. The chain is 4-diphosphocytidyl-2-C-methyl-D-erythritol kinase from Thermotoga petrophila (strain ATCC BAA-488 / DSM 13995 / JCM 10881 / RKU-1).